The chain runs to 482 residues: MEQPQAECPAPSKTNSAETVESEKHEALSGPEKHPQDKDGADAAPEKHPQDKDGADAHGEAGKQKSGDQTLPPVQDGGNLECPPPEASSSPPGPACGIPSEVETTEACSRPQQLPQSPRIQQPDLDFYCVKWIPWKGERTPIITQSSNGPCPLLAIMNILFLQWKVKLPPQKEVITSDELLTHLGNCLLSIKPQEKSEGLQLNFQQNVGDAMTVLPKLATGLDVNVRFTGVSDFEYTPECSVFDLLGVPLYHGWLVDPQSPEAVSAVGKLSYNQLVEKIIICKHSSDSNLVTEGLIAEQFLETTAAQLTYHGLCELTATAKEDELSVFFRNNHFSTMTKHKSHLYLLVTDQGFLQEEQVVWESLHNVDGDSCFCDSDFHLSHSLGKSHGAEGGSGSPEKQLQVDQDYLIALSLQQQQQPQGMLGLSDLELAQQLQQEEYQQQQAVQPVRTRAPSSPGRGATSGRPAGERRQRSKTESDCVLL.

The disordered stretch occupies residues 1-119 (MEQPQAECPA…RPQQLPQSPR (119 aa)). Basic and acidic residues predominate over residues 21–66 (ESEKHEALSGPEKHPQDKDGADAAPEKHPQDKDGADAHGEAGKQKS). A compositionally biased stretch (pro residues) spans 82–94 (CPPPEASSSPPGP). Polar residues predominate over residues 106–119 (EACSRPQQLPQSPR). The residue at position 117 (Ser117) is a Phosphoserine. Cys151 functions as the Nucleophile in the catalytic mechanism. The Proton acceptor role is filled by His333. Residues 402–441 (QVDQDYLIALSLQQQQQPQGMLGLSDLELAQQLQQEEYQQ) form a ubiquitin-binding domain (UBD) region. Positions 437–446 (EEYQQQQAVQ) are enriched in low complexity. The interval 437 to 482 (EEYQQQQAVQPVRTRAPSSPGRGATSGRPAGERRQRSKTESDCVLL) is disordered. Ser454 is modified (phosphoserine). The span at 466-482 (AGERRQRSKTESDCVLL) shows a compositional bias: basic and acidic residues.

The protein belongs to the MINDY deubiquitinase family. FAM63 subfamily.

It catalyses the reaction Thiol-dependent hydrolysis of ester, thioester, amide, peptide and isopeptide bonds formed by the C-terminal Gly of ubiquitin (a 76-residue protein attached to proteins as an intracellular targeting signal).. In terms of biological role, hydrolase that can specifically remove 'Lys-48'-linked conjugated ubiquitin from proteins. Has exodeubiquitinase activity and has a preference for long polyubiquitin chains. May play a regulatory role at the level of protein turnover. The protein is Ubiquitin carboxyl-terminal hydrolase MINDY-1 (Mindy1) of Rattus norvegicus (Rat).